The following is a 497-amino-acid chain: 5'-AMP-activated protein kinase subunit gamma-3 (497 aa).

Residues 16–143 are disordered; sequence STQTPSWSSF…SSSSTDDLDQ (128 aa). A compositionally biased stretch (polar residues) spans 39-54; that stretch reads GDSTSWPSPAMTTSAE. The segment covering 68 to 79 has biased composition (basic and acidic residues); sequence KSQEDVEERELP. CBS domains follow at residues 204–265, 287–345, and 363–423; these read MATS…RSPL, CFKP…QRTL, and TFRD…HLDI. Residues Arg-232, 247-252, Val-292, 313-314, and Lys-332 contribute to the ADP site; these read MLTITD and HR. Residues Arg-232, 247–252, Val-292, His-313, 313–314, Lys-332, Thr-363, Ala-368, 389–390, 405–408, Arg-432, Leu-440, His-461, 461–462, and 477–480 each bind AMP; these read MLTITD, HR, SA, SRFD, and SLSD. Residues Arg-232, 247–252, Val-292, 313–314, Arg-314, and Lys-332 contribute to the ATP site; these read MLTITD and HR. Residues 300 to 321 carry the AMPK pseudosubstrate motif; the sequence is LFEAVYTLIKNRIHRLPVLDPV. ADP is bound by residues 405–408, Arg-432, Leu-440, and 461–462; these read SRFD and HR. Residues 405-408, Arg-432, Leu-440, and 461-462 contribute to the ATP site; these read SRFD and HR. Positions 435–494 constitute a CBS 4 domain; the sequence is CLEGVLSCQPHETLGEVIDRIAREQVHRLVLVDETQHLLGVVSLSDILQALVLSPAGIDA.

It belongs to the 5'-AMP-activated protein kinase gamma subunit family. In terms of assembly, AMPK is a heterotrimer of an alpha catalytic subunit (PRKAA1 or PRKAA2), a beta (PRKAB1 or PRKAB2) and a gamma non-catalytic subunits (PRKAG1, PRKAG2 or PRKAG3). Interacts with FNIP1 and FNIP2. Phosphorylated by ULK1; leading to negatively regulate AMPK activity and suggesting the existence of a regulatory feedback loop between ULK1 and AMPK. In terms of processing, glycosylated; O-GlcNAcylated by OGT, promoting the AMP-activated protein kinase (AMPK) activity.

Functionally, AMP/ATP-binding subunit of AMP-activated protein kinase (AMPK), an energy sensor protein kinase that plays a key role in regulating cellular energy metabolism. In response to reduction of intracellular ATP levels, AMPK activates energy-producing pathways and inhibits energy-consuming processes: inhibits protein, carbohydrate and lipid biosynthesis, as well as cell growth and proliferation. AMPK acts via direct phosphorylation of metabolic enzymes, and by longer-term effects via phosphorylation of transcription regulators. AMPK also acts as a regulator of cellular polarity by remodeling the actin cytoskeleton; probably by indirectly activating myosin. The AMPK gamma3 subunit is a non-catalytic subunit with a regulatory role in muscle energy metabolism. It mediates binding to AMP, ADP and ATP, leading to AMPK activation or inhibition: AMP-binding results in allosteric activation of alpha catalytic subunit (PRKAA1 or PRKAA2) both by inducing phosphorylation and preventing dephosphorylation of catalytic subunits. ADP also stimulates phosphorylation, without stimulating already phosphorylated catalytic subunit. ATP promotes dephosphorylation of catalytic subunit, rendering the AMPK enzyme inactive. This Bos taurus (Bovine) protein is 5'-AMP-activated protein kinase subunit gamma-3 (PRKAG3).